A 37-amino-acid polypeptide reads, in one-letter code: Photosystem I reaction center subunit VIII (37 aa).

The chain crosses the membrane as a helical span at residues 9 to 29; that stretch reads SILVTLVGLVFPAFAMASLFL.

This sequence belongs to the PsaI family.

The protein resides in the plastid. The protein localises to the chloroplast thylakoid membrane. In terms of biological role, may help in the organization of the PsaL subunit. The sequence is that of Photosystem I reaction center subunit VIII from Pelargonium hortorum (Common geranium).